We begin with the raw amino-acid sequence, 431 residues long: Beta-lactamase hydrolase-like protein (431 aa).

Zn(2+) contacts are provided by His212, His214, and His286. Asp309 is a substrate binding site.

Belongs to the metallo-beta-lactamase superfamily. Zn(2+) is required as a cofactor.

Could play a role in cell adherence or biofilm development. The protein is Beta-lactamase hydrolase-like protein of Agrobacterium fabrum (strain C58 / ATCC 33970) (Agrobacterium tumefaciens (strain C58)).